Reading from the N-terminus, the 574-residue chain is Serine carboxypeptidase ctsa-3.1 (574 aa).

The N-terminal stretch at 1–19 (MCRTLLGVAFLVVTVLSQG) is a signal peptide. N-linked (GlcNAc...) asparagine glycans are attached at residues Asn-48 and Asn-163. Residue Ser-172 is part of the active site. N-linked (GlcNAc...) asparagine glycans are attached at residues Asn-241, Asn-408, Asn-414, and Asn-426. Catalysis depends on residues Asp-441 and His-507. Asn-534 is a glycosylation site (N-linked (GlcNAc...) asparagine).

Belongs to the peptidase S10 family.

The chain is Serine carboxypeptidase ctsa-3.1 from Caenorhabditis elegans.